We begin with the raw amino-acid sequence, 183 residues long: Protein FAM180B (183 aa).

The signal sequence occupies residues 1-23 (MAATLQFLVCLVVAICLLSGVTT).

This sequence belongs to the FAM180 family.

Its subcellular location is the secreted. The chain is Protein FAM180B (FAM180B) from Homo sapiens (Human).